Here is a 61-residue protein sequence, read N- to C-terminus: Large ribosomal subunit protein bL28 (61 aa).

The interval 1–27 (MAKDFVTGKKTTFGNTRSHALNSSSRS) is disordered. Residues 9–27 (KKTTFGNTRSHALNSSSRS) are compositionally biased toward polar residues.

The protein belongs to the bacterial ribosomal protein bL28 family.

The protein is Large ribosomal subunit protein bL28 of Lactobacillus delbrueckii subsp. bulgaricus (strain ATCC 11842 / DSM 20081 / BCRC 10696 / JCM 1002 / NBRC 13953 / NCIMB 11778 / NCTC 12712 / WDCM 00102 / Lb 14).